Consider the following 144-residue polypeptide: Large ribosomal subunit protein uL15 (144 aa).

The segment at 1-54 (MRLNTLSPAAGSKHAPKRVGRGMGSGLGKTAGRGHKGQKSRSGGGVRPGFEGGQ) is disordered. 2 stretches are compositionally biased toward gly residues: residues 21-31 (RGMGSGLGKTA) and 42-52 (SGGGVRPGFEG).

The protein belongs to the universal ribosomal protein uL15 family. As to quaternary structure, part of the 50S ribosomal subunit.

Its function is as follows. Binds to the 23S rRNA. In Shewanella baltica (strain OS223), this protein is Large ribosomal subunit protein uL15.